Reading from the N-terminus, the 381-residue chain is cAMP-dependent protein kinase type I-alpha regulatory subunit (381 aa).

M1 carries the N-acetylmethionine modification. The tract at residues 1–135 (MESGSTAASE…AALAKAIEKN (135 aa)) is dimerization and phosphorylation. S3 is modified (phosphoserine). Residues 64 to 96 (QIQNLQKAGTRTDSREDEISPPPPNPVVKGRRR) are disordered. Phosphothreonine is present on T75. Phosphoserine is present on residues S77 and S83. The short motif at 96–100 (RRGAI) is the Pseudophosphorylation motif element. S101 is subject to Phosphoserine. 3',5'-cyclic AMP-binding positions include 137–254 (LFSH…SKVS), E202, R211, 255–381 (ILES…SLSV), E326, and R335. S258 is modified (phosphoserine).

The protein belongs to the cAMP-dependent kinase regulatory chain family. The inactive holoenzyme is composed of two regulatory chains and two catalytic chains. Activation by cAMP releases the two active catalytic monomers and the regulatory dimer. Interacts with PRKACA and PRKACB. PRKAR1A also interacts with RFC2; the complex may be involved in cell survival. Interacts with AKAP4. Interacts with RARA; the interaction occurs in the presence of cAMP or FSH and regulates RARA transcriptional activity. Interacts with the phosphorylated form of PJA2. Interacts with CBFA2T3. Interacts with PRKX; regulates this cAMP-dependent protein kinase. Interacts with smAKAP; this interaction may target PRKAR1A to the plasma membrane. Interacts with AICDA. Post-translationally, the pseudophosphorylation site binds to the substrate-binding region of the catalytic chain, resulting in the inhibition of its activity.

It localises to the cell membrane. Functionally, regulatory subunit of the cAMP-dependent protein kinases involved in cAMP signaling in cells. This Pongo abelii (Sumatran orangutan) protein is cAMP-dependent protein kinase type I-alpha regulatory subunit (PRKAR1A).